We begin with the raw amino-acid sequence, 245 residues long: MIIPAIDLIDGQVVRLYQGDYEQQTTFNLSPLDQLKSYQAQGANLLHIVDLTGAKDPTKRQTALISELVNHLDTPIQVGGGIRTEAQLNELLEIGVSRVVIGSLAVKEPELVKSWFEKYGNEAICLALDVNINEQGEKIVAVSGWQTGGGKSLESLVEEFKTVDLKHALVTDISRDGTLQGANTELYREIAASYPEIQWQASGGIATLADVNAVKDSGADGIIIGKALLIKQFSVKEAIACWPNA.

Asp-7 functions as the Proton acceptor in the catalytic mechanism. The active-site Proton donor is Asp-129.

This sequence belongs to the HisA/HisF family.

The protein resides in the cytoplasm. The catalysed reaction is 1-(5-phospho-beta-D-ribosyl)-5-[(5-phospho-beta-D-ribosylamino)methylideneamino]imidazole-4-carboxamide = 5-[(5-phospho-1-deoxy-D-ribulos-1-ylimino)methylamino]-1-(5-phospho-beta-D-ribosyl)imidazole-4-carboxamide. It functions in the pathway amino-acid biosynthesis; L-histidine biosynthesis; L-histidine from 5-phospho-alpha-D-ribose 1-diphosphate: step 4/9. The sequence is that of 1-(5-phosphoribosyl)-5-[(5-phosphoribosylamino)methylideneamino] imidazole-4-carboxamide isomerase from Shewanella halifaxensis (strain HAW-EB4).